A 629-amino-acid chain; its full sequence is 1-deoxy-D-xylulose-5-phosphate synthase (629 aa).

Thiamine diphosphate-binding positions include histidine 85 and glycine 126–serine 128. Aspartate 157 is a Mg(2+) binding site. Residues glycine 158–serine 159, asparagine 186, tyrosine 293, and glutamate 373 each bind thiamine diphosphate. A Mg(2+)-binding site is contributed by asparagine 186.

The protein belongs to the transketolase family. DXPS subfamily. As to quaternary structure, homodimer. Mg(2+) is required as a cofactor. The cofactor is thiamine diphosphate.

The catalysed reaction is D-glyceraldehyde 3-phosphate + pyruvate + H(+) = 1-deoxy-D-xylulose 5-phosphate + CO2. It functions in the pathway metabolic intermediate biosynthesis; 1-deoxy-D-xylulose 5-phosphate biosynthesis; 1-deoxy-D-xylulose 5-phosphate from D-glyceraldehyde 3-phosphate and pyruvate: step 1/1. Catalyzes the acyloin condensation reaction between C atoms 2 and 3 of pyruvate and glyceraldehyde 3-phosphate to yield 1-deoxy-D-xylulose-5-phosphate (DXP). This is 1-deoxy-D-xylulose-5-phosphate synthase from Helicobacter hepaticus (strain ATCC 51449 / 3B1).